The chain runs to 227 residues: uncharacterized protein (227 aa).

It belongs to the flavoredoxin family. It depends on FMN as a cofactor.

This is an uncharacterized protein from Deinococcus radiodurans (strain ATCC 13939 / DSM 20539 / JCM 16871 / CCUG 27074 / LMG 4051 / NBRC 15346 / NCIMB 9279 / VKM B-1422 / R1).